A 256-amino-acid polypeptide reads, in one-letter code: Protein CUSTOS (256 aa).

Low complexity predominate over residues 1 to 19; that stretch reads MVAPSGAMSDSENSSSSSS. Disordered regions lie at residues 1-83, 127-163, and 227-256; these read MVAP…TPEF, FTSIPGGHKKEASPRPCRKRQPPSSSEDSDEELQRCR, and IQKKRKKKAKKSREAPLCPPAECAAAKPEN. Residue Ser62 is modified to Phosphoserine. Residues 63–83 are compositionally biased toward basic and acidic residues; that stretch reads RRHEVNQHEEDGNDLRTTPEF. The residue at position 80 (Thr80) is a Phosphothreonine. Phosphoserine is present on Ser139. The short motif at 228–235 is the Nucleolar localization signal (NLS) element; sequence QKKRKKKA. Positions 228-237 are enriched in basic residues; that stretch reads QKKRKKKAKK. The segment covering 246-256 has biased composition (low complexity); the sequence is PAECAAAKPEN.

It belongs to the CUSTOS family.

The protein resides in the nucleus envelope. Its function is as follows. Plays a role in the regulation of Wnt signaling pathway during early development. This is Protein CUSTOS from Mus musculus (Mouse).